The sequence spans 143 residues: Nucleoside diphosphate kinase (143 aa).

Positions 11, 59, 87, 93, 104, and 114 each coordinate ATP. His117 (pros-phosphohistidine intermediate) is an active-site residue.

The protein belongs to the NDK family. In terms of assembly, homotetramer. The cofactor is Mg(2+).

Its subcellular location is the cytoplasm. The enzyme catalyses a 2'-deoxyribonucleoside 5'-diphosphate + ATP = a 2'-deoxyribonucleoside 5'-triphosphate + ADP. The catalysed reaction is a ribonucleoside 5'-diphosphate + ATP = a ribonucleoside 5'-triphosphate + ADP. In terms of biological role, major role in the synthesis of nucleoside triphosphates other than ATP. The ATP gamma phosphate is transferred to the NDP beta phosphate via a ping-pong mechanism, using a phosphorylated active-site intermediate. The chain is Nucleoside diphosphate kinase from Shewanella sp. (strain W3-18-1).